The chain runs to 754 residues: MQLINVIKSSGVSQSFDPQKIIKVLSWAAEGTSVDPYELYENIKSYLRDGMTTDDIQTIVIKAAANSISVEEPDYQYVAARCLMFALRKHVYGQYEPRSFIDHISYCVNAGKYDPELLSKYSAEEITFLESKIKHERDMEFTYSGAMQLKEKYLVKDKTTGQIYETPQFAFMTIGMALHQDEPVDRLKHVIRFYEAVSTRQISLPTPIMAGCRTPTRQFSSCVVIEAGDSLKSINKASASIVEYISKRAGIGINVGMIRAEGSKIGMGEVRHTGVIPFWKHFQTAVKSCSQGGIRGGAATAYYPIWHLEVENLLVLKNNKGVEENRIRHMDYGVQLNDLMMERFGKNDYITLFSPHEMGGELYYSYFKDQDRFRELYEAAEKDPNIRKKRIKARELFELLMTERSGTARIYVQFIDNTNNYTPFIREKAPIRQSNLCCEIAIPTNDVNSPDAEIGLCTLSAFVLDNFDWQDQDKINELAEVQVRALDNLLDYQGYPVPEAEKAKKRRNLGVGVTNYAAWLASNFASYEDANDLTHELFERLQYGLIKASIKLAKEKGPSEYYSDTRWSRGELPIDWYNKKIDQIAAPKYVCDWSALREDLKLFGIRNSTLSALMPCESSSQVSNSTNGYEPPRGPVSVKESKEGSFNQVVPNIEHNIDLYDYTWKLAKKGNKPYLTQVAIMLKWVCQSASANTYYDPQIFPKGKVPMSIMIDDMLYGWYYGIKNFYYHNTRDGSGTDDYEIETPKADDCAACKL.

Residues 4-93 enclose the ATP-cone domain; that stretch reads INVIKSSGVS…MFALRKHVYG (90 aa). Residues Thr206, 221 to 222, Gly250, 435 to 439, and 615 to 619 each bind substrate; these read SC, NLCCE, and PCESS. Residues Cys222 and Cys457 are joined by a disulfide bond. Asn435 serves as the catalytic Proton acceptor. Cys437 acts as the Cysteine radical intermediate in catalysis. Catalysis depends on Glu439, which acts as the Proton acceptor. The disordered stretch occupies residues 621–641; sequence QVSNSTNGYEPPRGPVSVKES.

It belongs to the ribonucleoside diphosphate reductase large chain family. As to quaternary structure, heterodimer of a large and a small subunit.

The catalysed reaction is a 2'-deoxyribonucleoside 5'-diphosphate + [thioredoxin]-disulfide + H2O = a ribonucleoside 5'-diphosphate + [thioredoxin]-dithiol. Its activity is regulated as follows. Under complex allosteric control mediated by deoxynucleoside triphosphates and ATP binding. The type of nucleotide bound at the specificity site determines substrate preference. It seems probable that ATP makes the enzyme reduce CDP and UDP, dGTP favors ADP reduction and dTTP favors GDP reduction. In terms of biological role, provides the precursors necessary for DNA synthesis. Catalyzes the biosynthesis of deoxyribonucleotides from the corresponding ribonucleotides. This chain is Ribonucleoside-diphosphate reductase subunit alpha (NRDA), found in Escherichia coli (Bacteriophage T4).